Here is a 155-residue protein sequence, read N- to C-terminus: Ribonuclease H (155 aa).

The 142-residue stretch at 4 to 145 folds into the RNase H type-1 domain; that stretch reads DISKVVIYTD…ADKLAVQGRQ (142 aa). The Mg(2+) site is built by D13, E51, D73, and D137.

It belongs to the RNase H family. Monomer. Requires Mg(2+) as cofactor.

It is found in the cytoplasm. It catalyses the reaction Endonucleolytic cleavage to 5'-phosphomonoester.. Endonuclease that specifically degrades the RNA of RNA-DNA hybrids. The protein is Ribonuclease H of Rickettsia bellii (strain RML369-C).